A 526-amino-acid polypeptide reads, in one-letter code: Zinc finger protein 69 homolog (526 aa).

Residues 1 to 39 (MPQQLLITLPTEASTWVKLQHPKKAVEGAPLWEDVTKMF) enclose the SCAN box domain. The region spanning 76 to 147 (LTFKDISIDF…EKEGPGDPSS (72 aa)) is the KRAB domain. 9 C2H2-type zinc fingers span residues 271 to 293 (YECN…MRIH), 299 to 321 (FRCK…QRIH), 327 to 349 (FECE…HRTH), 355 to 377 (YVCD…LRTH), 383 to 405 (FTCN…IRIH), 411 to 433 (YACT…QRIH), 439 to 461 (YKCK…KTVH), 467 to 489 (YECN…QRHH), and 495 to 517 (YECN…HEIH).

This sequence belongs to the krueppel C2H2-type zinc-finger protein family. As to expression, expressed in visceral and subcutaneous adipose tissue.

The protein localises to the nucleus. In terms of biological role, putative transcription factor that appears to regulate lipid metabolism. The protein is Zinc finger protein 69 homolog (ZFP69) of Homo sapiens (Human).